A 377-amino-acid chain; its full sequence is Subtilisin-like protease CPC735_012930 (377 aa).

A signal peptide spans 1–20 (MSILFKIFASTLAVVSVVNA). A propeptide spanning residues 21 to 118 (GELLNFENER…VEPDRMASAT (98 aa)) is cleaved from the precursor. Residues 36–114 (SYIVVMKDGT…HVKYVEPDRM (79 aa)) enclose the Inhibitor I9 domain. Residues 128 to 377 (SWGLGRISHT…NKLLYNKSGF (250 aa)) enclose the Peptidase S8 domain. Active-site charge relay system residues include D160 and H191. N252 is a glycosylation site (N-linked (GlcNAc...) asparagine). S323 serves as the catalytic Charge relay system. N-linked (GlcNAc...) asparagine glycans are attached at residues N364 and N373.

The protein belongs to the peptidase S8 family.

It is found in the secreted. Its function is as follows. Secreted subtilisin-like serine protease with keratinolytic activity that contributes to pathogenicity. The polypeptide is Subtilisin-like protease CPC735_012930 (Coccidioides posadasii (strain C735) (Valley fever fungus)).